A 143-amino-acid polypeptide reads, in one-letter code: Ribonuclease H (143 aa).

An RNase H type-1 domain is found at 1–141 (MKHVEIFTDG…VDKLASDAAL (141 aa)). Mg(2+) is bound by residues aspartate 9, glutamate 47, aspartate 69, and aspartate 133.

It belongs to the RNase H family. In terms of assembly, monomer. It depends on Mg(2+) as a cofactor.

Its subcellular location is the cytoplasm. It catalyses the reaction Endonucleolytic cleavage to 5'-phosphomonoester.. Its function is as follows. Endonuclease that specifically degrades the RNA of RNA-DNA hybrids. In Novosphingobium aromaticivorans (strain ATCC 700278 / DSM 12444 / CCUG 56034 / CIP 105152 / NBRC 16084 / F199), this protein is Ribonuclease H.